Consider the following 280-residue polypeptide: MSQFISLTQYQLIEVQGADAEKYLQGQLTSDVVRLASGATTLTAHCDPKGKMNAIYRLFKVSSEQFFLLVKKDILPSGLDALKKYAVFSKVSFDLRDWQIIGVIGEKCGKITPNFSLEIDEKRSILLNETELPVNFNGDEKIWEVADIQAGLPNLSPQTQNEFIPQALNLQAIEQAISFTKGCYIGQETVARAKYRGANKRAMFIFKVQTQQEAEIGSEIEMQLEANWRKTGTITSAVNLDGVLWLQVVMNNDIDSEQQFRLLNSEILLERVQLPYSITE.

This sequence to E.coli YgfZ (UP14) and B.aphidicola (subsp. Acyrthosiphon pisum) BU435.

This is an uncharacterized protein from Haemophilus influenzae (strain ATCC 51907 / DSM 11121 / KW20 / Rd).